Here is a 1481-residue protein sequence, read N- to C-terminus: Chromosome partition protein MukB (1481 aa).

An ATP-binding site is contributed by 34–41 (GGNGAGKS). Coiled coils occupy residues 338–480 (SLVQ…QAYQ), 509–604 (QHLA…APVW), 780–805 (RAARENRLEALYQERDSLAERYATLS), 835–1116 (EAEI…AKAG), and 1210–1265 (EAIE…LQAV). The tract at residues 666–783 (PSGAEDSRMI…EVPLFGRAAR (118 aa)) is flexible hinge.

This sequence belongs to the SMC family. MukB subfamily. As to quaternary structure, homodimerization via its hinge domain. Binds to DNA via its C-terminal region. Interacts, and probably forms a ternary complex, with MukE and MukF via its C-terminal region. The complex formation is stimulated by calcium or magnesium. Interacts with tubulin-related protein FtsZ.

The protein resides in the cytoplasm. Its subcellular location is the nucleoid. Its function is as follows. Plays a central role in chromosome condensation, segregation and cell cycle progression. Functions as a homodimer, which is essential for chromosome partition. Involved in negative DNA supercoiling in vivo, and by this means organize and compact chromosomes. May achieve or facilitate chromosome segregation by condensation DNA from both sides of a centrally located replisome during cell division. The polypeptide is Chromosome partition protein MukB (Yersinia enterocolitica serotype O:8 / biotype 1B (strain NCTC 13174 / 8081)).